The following is a 453-amino-acid chain: Bifunctional protein GlmU (453 aa).

The segment at 1 to 226 is pyrophosphorylase; that stretch reads MKFSAVILAA…AIEVEGVNDR (226 aa). Residues 8 to 11, lysine 22, glutamine 73, 78 to 79, 100 to 102, glycine 137, glutamate 151, asparagine 166, and asparagine 224 contribute to the UDP-N-acetyl-alpha-D-glucosamine site; these read LAAG, GT, and YGD. Aspartate 102 lines the Mg(2+) pocket. Asparagine 224 contacts Mg(2+). The linker stretch occupies residues 227 to 247; that stretch reads AQLARLERAFQSMQAQKLLEQ. Residues 248–453 are N-acetyltransferase; that stretch reads GVMLRDPARF…TGWQRPVKQK (206 aa). Residues arginine 330 and lysine 348 each contribute to the UDP-N-acetyl-alpha-D-glucosamine site. Histidine 360 functions as the Proton acceptor in the catalytic mechanism. Tyrosine 363 and asparagine 374 together coordinate UDP-N-acetyl-alpha-D-glucosamine. Acetyl-CoA is bound by residues alanine 377, 383-384, serine 402, alanine 420, and arginine 437; that span reads NY.

This sequence in the N-terminal section; belongs to the N-acetylglucosamine-1-phosphate uridyltransferase family. In the C-terminal section; belongs to the transferase hexapeptide repeat family. Homotrimer. Mg(2+) serves as cofactor.

The protein resides in the cytoplasm. It catalyses the reaction alpha-D-glucosamine 1-phosphate + acetyl-CoA = N-acetyl-alpha-D-glucosamine 1-phosphate + CoA + H(+). The catalysed reaction is N-acetyl-alpha-D-glucosamine 1-phosphate + UTP + H(+) = UDP-N-acetyl-alpha-D-glucosamine + diphosphate. It participates in nucleotide-sugar biosynthesis; UDP-N-acetyl-alpha-D-glucosamine biosynthesis; N-acetyl-alpha-D-glucosamine 1-phosphate from alpha-D-glucosamine 6-phosphate (route II): step 2/2. Its pathway is nucleotide-sugar biosynthesis; UDP-N-acetyl-alpha-D-glucosamine biosynthesis; UDP-N-acetyl-alpha-D-glucosamine from N-acetyl-alpha-D-glucosamine 1-phosphate: step 1/1. It functions in the pathway bacterial outer membrane biogenesis; LPS lipid A biosynthesis. In terms of biological role, catalyzes the last two sequential reactions in the de novo biosynthetic pathway for UDP-N-acetylglucosamine (UDP-GlcNAc). The C-terminal domain catalyzes the transfer of acetyl group from acetyl coenzyme A to glucosamine-1-phosphate (GlcN-1-P) to produce N-acetylglucosamine-1-phosphate (GlcNAc-1-P), which is converted into UDP-GlcNAc by the transfer of uridine 5-monophosphate (from uridine 5-triphosphate), a reaction catalyzed by the N-terminal domain. The protein is Bifunctional protein GlmU of Vibrio campbellii (strain ATCC BAA-1116).